We begin with the raw amino-acid sequence, 130 residues long: Small ribosomal subunit protein uS11 (130 aa).

This sequence belongs to the universal ribosomal protein uS11 family. In terms of assembly, part of the 30S ribosomal subunit. Interacts with proteins S7 and S18. Binds to IF-3.

In terms of biological role, located on the platform of the 30S subunit, it bridges several disparate RNA helices of the 16S rRNA. Forms part of the Shine-Dalgarno cleft in the 70S ribosome. The protein is Small ribosomal subunit protein uS11 of Thermotoga maritima (strain ATCC 43589 / DSM 3109 / JCM 10099 / NBRC 100826 / MSB8).